We begin with the raw amino-acid sequence, 1764 residues long: Latent-transforming growth factor beta-binding protein 2 (1764 aa).

The N-terminal stretch at Met-1–Ala-35 is a signal peptide. The disordered stretch occupies residues Pro-80 to Val-140. Residues Ile-94–Val-115 are heparin-binding. The span at Arg-108 to Gly-128 shows a compositional bias: polar residues. Asn-175 carries an N-linked (GlcNAc...) asparagine glycan. One can recognise an EGF-like 1 domain in the interval Ile-181–Glu-213. 3 disulfide bridges follow: Cys-185-Cys-195, Cys-189-Cys-201, and Cys-203-Cys-212. Positions Glu-220 to Ala-279 are disordered. A heparin-binding region spans residues Ala-226 to Ser-243. A compositionally biased stretch (pro residues) spans Leu-257–Ser-266. Asn-330 carries an N-linked (GlcNAc...) asparagine glycan. Leu-331–Val-341 serves as a coordination point for heparin. The EGF-like 2 domain maps to Arg-383 to His-415. 3 disulfide bridges follow: Cys-387–Cys-397, Cys-391–Cys-403, and Cys-405–Cys-414. A glycan (N-linked (GlcNAc...) asparagine) is linked at Asn-408. Residues Glu-484–Val-529 form a disordered region. Ser-493 is modified (phosphoserine). The TB 1 domain maps to Gly-538 to Gly-590. 3 cysteine pairs are disulfide-bonded: Cys-540/Cys-562, Cys-549/Cys-575, and Cys-563/Cys-578. Residue Asn-602 is glycosylated (N-linked (GlcNAc...) asparagine). The region spanning Asp-608–Val-648 is the EGF-like 3; calcium-binding domain. 7 cysteine pairs are disulfide-bonded: Cys-612–Cys-623, Cys-618–Cys-632, Cys-634–Cys-647, Cys-660–Cys-682, Cys-669–Cys-695, Cys-683–Cys-698, and Cys-684–Cys-710. The TB 2 domain maps to Gly-658–Cys-710. Disordered regions lie at residues Lys-729–Leu-759 and Ser-786–Gln-809. Residues Gly-834 to Thr-876 enclose the EGF-like 4 domain. Disulfide bonds link Cys-838–Cys-851, Cys-846–Cys-860, Cys-862–Cys-875, Cys-881–Cys-892, Cys-886–Cys-901, Cys-903–Cys-918, Cys-924–Cys-935, Cys-930–Cys-944, Cys-946–Cys-958, Cys-964–Cys-975, Cys-970–Cys-984, Cys-987–Cys-998, Cys-1004–Cys-1015, Cys-1010–Cys-1024, Cys-1026–Cys-1039, Cys-1045–Cys-1056, Cys-1051–Cys-1065, Cys-1068–Cys-1081, Cys-1087–Cys-1098, Cys-1093–Cys-1107, Cys-1110–Cys-1123, Cys-1129–Cys-1141, Cys-1136–Cys-1150, Cys-1152–Cys-1164, Cys-1170–Cys-1182, Cys-1176–Cys-1191, Cys-1193–Cys-1206, Cys-1212–Cys-1223, Cys-1218–Cys-1232, Cys-1234–Cys-1247, Cys-1253–Cys-1265, Cys-1259–Cys-1274, Cys-1276–Cys-1289, Cys-1295–Cys-1307, Cys-1302–Cys-1316, Cys-1318–Cys-1332, Cys-1359–Cys-1382, Cys-1369–Cys-1394, Cys-1383–Cys-1397, Cys-1435–Cys-1448, Cys-1443–Cys-1457, Cys-1459–Cys-1472, Cys-1478–Cys-1488, Cys-1483–Cys-1497, and Cys-1499–Cys-1512. The EGF-like 5; calcium-binding domain maps to Asp-877 to Gln-919. Residues Asp-920–Gln-959 form the EGF-like 6; calcium-binding domain. The 40-residue stretch at Asp-960 to Val-999 folds into the EGF-like 7; calcium-binding domain. The region spanning Asp-1000–Arg-1040 is the EGF-like 8; calcium-binding domain. The 42-residue stretch at Asp-1041–Glu-1082 folds into the EGF-like 9; calcium-binding domain. The EGF-like 10; calcium-binding domain occupies Asp-1083–Glu-1124. An EGF-like 11; calcium-binding domain is found at Asp-1125–Glu-1165. The N-linked (GlcNAc...) asparagine glycan is linked to Asn-1160. The EGF-like 12; calcium-binding domain occupies Asp-1166 to Gln-1207. Positions Asp-1208–Val-1248 constitute an EGF-like 13; calcium-binding domain. In terms of domain architecture, EGF-like 15; calcium-binding spans Asp-1249–Val-1290. Asn-1255 carries N-linked (GlcNAc...) asparagine glycosylation. The region spanning Asp-1291 to Arg-1333 is the EGF-like 16; calcium-binding domain. The region spanning Met-1357 to Cys-1409 is the TB 3 domain. An N-linked (GlcNAc...) asparagine glycan is attached at Asn-1376. One can recognise an EGF-like 17; calcium-binding domain in the interval Asp-1431–Gln-1473. Residues Asp-1474–Val-1513 enclose the EGF-like 18; calcium-binding domain. N-linked (GlcNAc...) asparagine glycosylation occurs at Asn-1514. A TB 4 domain is found at Asp-1530–Cys-1582. 10 cysteine pairs are disulfide-bonded: Cys-1532-Cys-1555, Cys-1541-Cys-1567, Cys-1556-Cys-1570, Cys-1557-Cys-1582, Cys-1680-Cys-1691, Cys-1686-Cys-1700, Cys-1702-Cys-1715, Cys-1721-Cys-1736, Cys-1731-Cys-1745, and Cys-1747-Cys-1760. Residues Ala-1585 to Glu-1764 form a C-terminal domain region. Residues Gln-1676–Val-1716 enclose the EGF-like 19; calcium-binding domain. The EGF-like 20; calcium-binding domain maps to Asp-1717 to Ala-1761.

The protein belongs to the LTBP family. In terms of assembly, forms part of the large latent transforming growth factor beta precursor complex; removal is essential for activation of complex. Interacts with SDC4. Interacts (via C-terminal domain) with FBN1 (via N-terminal domain) in a Ca(+2)-dependent manner. Post-translationally, N-Glycosylated. Contains hydroxylated asparagine residues. As to expression, expressed in cortical astrocytes and glioma cells. Expression is up-regulated by TGFB1.

It is found in the secreted. Its subcellular location is the extracellular space. The protein resides in the extracellular matrix. Functionally, may play an integral structural role in elastic-fiber architectural organization and/or assembly. In Rattus norvegicus (Rat), this protein is Latent-transforming growth factor beta-binding protein 2 (Ltbp2).